Here is a 121-residue protein sequence, read N- to C-terminus: Small ribosomal subunit protein uS12 (121 aa).

Residues 1–25 are disordered; sequence MPTINQLVRKNRKQKKSQSKSPVLE. Basic residues predominate over residues 9-18; sequence RKNRKQKKSQ. Position 89 is a 3-methylthioaspartic acid (D89).

Belongs to the universal ribosomal protein uS12 family. Part of the 30S ribosomal subunit. Contacts proteins S8 and S17. May interact with IF1 in the 30S initiation complex.

Its function is as follows. With S4 and S5 plays an important role in translational accuracy. Functionally, interacts with and stabilizes bases of the 16S rRNA that are involved in tRNA selection in the A site and with the mRNA backbone. Located at the interface of the 30S and 50S subunits, it traverses the body of the 30S subunit contacting proteins on the other side and probably holding the rRNA structure together. The combined cluster of proteins S8, S12 and S17 appears to hold together the shoulder and platform of the 30S subunit. This is Small ribosomal subunit protein uS12 from Rhodopirellula baltica (strain DSM 10527 / NCIMB 13988 / SH1).